Consider the following 289-residue polypeptide: Serine/threonine-protein phosphatase Pgam5, mitochondrial (289 aa).

A helical membrane pass occupies residues Leu7–Leu23.

Belongs to the phosphoglycerate mutase family. BPG-dependent PGAM subfamily. Interacts with Pk92B/ASK1.

Its subcellular location is the mitochondrion outer membrane. It carries out the reaction O-phospho-L-seryl-[protein] + H2O = L-seryl-[protein] + phosphate. The enzyme catalyses O-phospho-L-threonyl-[protein] + H2O = L-threonyl-[protein] + phosphate. Functionally, displays phosphatase activity for serine/threonine residues, and dephosphorylates and activates Pk92B kinase. Has apparently no phosphoglycerate mutase activity. The chain is Serine/threonine-protein phosphatase Pgam5, mitochondrial from Drosophila ananassae (Fruit fly).